A 350-amino-acid polypeptide reads, in one-letter code: Protein O-mannose kinase (350 aa).

Met-1 bears the N-acetylmethionine mark. Over 1 to 20 (MEKQPQNKRRGLAPREVPPA) the chain is Cytoplasmic. Residues 21–43 (VGLLLIMALMNTLLYLCLDHFFI) form a helical; Signal-anchor for type II membrane protein membrane-spanning segment. Residues 44-350 (APRQSIVDPR…AVMSQAREML (307 aa)) lie on the Lumenal side of the membrane. Residues 81-350 (VRQLKRVGEG…AVMSQAREML (270 aa)) form the Protein kinase domain. N-linked (GlcNAc...) asparagine glycans are attached at residues Asn-165, Asn-220, and Asn-235.

It belongs to the protein kinase superfamily. Ser/Thr protein kinase family. STKL subfamily.

Its subcellular location is the endoplasmic reticulum membrane. The enzyme catalyses 3-O-[beta-D-GalNAc-(1-&gt;3)-beta-D-GlcNAc-(1-&gt;4)-alpha-D-Man]-L-Thr-[protein] + ATP = 3-O-[beta-D-GalNAc-(1-&gt;3)-beta-D-GlcNAc-(1-&gt;4)-(O-6-P-alpha-D-Man)]-Thr-[protein] + ADP + H(+). Functionally, protein O-mannose kinase that specifically mediates phosphorylation at the 6-position of an O-mannose of the trisaccharide (N-acetylgalactosamine (GalNAc)-beta-1,3-N-acetylglucosamine (GlcNAc)-beta-1,4-mannose) to generate phosphorylated O-mannosyl trisaccharide (N-acetylgalactosamine-beta-1,3-N-acetylglucosamine-beta-1,4-(phosphate-6-)mannose). Phosphorylated O-mannosyl trisaccharide is a carbohydrate structure present in alpha-dystroglycan (DAG1), which is required for binding laminin G-like domain-containing extracellular proteins with high affinity. Only shows kinase activity when the GalNAc-beta-3-GlcNAc-beta-terminus is linked to the 4-position of O-mannose, suggesting that this disaccharide serves as the substrate recognition motif. The sequence is that of Protein O-mannose kinase (POMK) from Macaca fascicularis (Crab-eating macaque).